We begin with the raw amino-acid sequence, 561 residues long: uncharacterized protein (561 aa).

Residues 1 to 24 (MELGAWRSILYIAFLFAITRHAFC) form the signal peptide. Over 25–509 (KAVNLVHSPE…GYVYLSEIKQ (485 aa)) the chain is Lumenal. A helical transmembrane segment spans residues 510 to 530 (YSSLILISLWISLILFVSFLN). At 531–561 (RRLILHYSFESVHQLKTLTRKFIYSSLLKQD) the chain is on the cytoplasmic side.

It is found in the endoplasmic reticulum membrane. The protein resides in the golgi apparatus membrane. This is an uncharacterized protein from Schizosaccharomyces pombe (strain 972 / ATCC 24843) (Fission yeast).